The chain runs to 281 residues: Bifunctional protein FolD (281 aa).

NADP(+)-binding positions include 164–166 (GRS), Ser-189, and Thr-230.

Belongs to the tetrahydrofolate dehydrogenase/cyclohydrolase family. In terms of assembly, homodimer.

The enzyme catalyses (6R)-5,10-methylene-5,6,7,8-tetrahydrofolate + NADP(+) = (6R)-5,10-methenyltetrahydrofolate + NADPH. It catalyses the reaction (6R)-5,10-methenyltetrahydrofolate + H2O = (6R)-10-formyltetrahydrofolate + H(+). The protein operates within one-carbon metabolism; tetrahydrofolate interconversion. Functionally, catalyzes the oxidation of 5,10-methylenetetrahydrofolate to 5,10-methenyltetrahydrofolate and then the hydrolysis of 5,10-methenyltetrahydrofolate to 10-formyltetrahydrofolate. The chain is Bifunctional protein FolD from Dictyoglomus turgidum (strain DSM 6724 / Z-1310).